Here is a 1018-residue protein sequence, read N- to C-terminus: Contactin-1 (1018 aa).

Residues 1–20 (MKMWLLVSHLVIISITTCLA) form the signal peptide. Ig-like C2-type domains lie at 41–131 (PIFE…ATLS), 137–223 (PFPP…KSVF), 241–326 (PADI…ARIY), 331–407 (PEWV…AELK), 413–500 (PTFE…GTLV), and 504–601 (PTRI…LVVR). Disulfide bonds link Cys65/Cys114 and Cys158/Cys211. Residues Asn208 and Asn258 are each glycosylated (N-linked (GlcNAc...) asparagine). Cys263 and Cys310 are joined by a disulfide. An N-linked (GlcNAc...) asparagine glycan is attached at Asn338. 2 disulfide bridges follow: Cys352-Cys391 and Cys436-Cys484. N-linked (GlcNAc...) asparagine glycans are attached at residues Asn457 and Asn473. The N-linked (GlcNAc...) (complex) asparagine glycan is linked to Asn494. A glycan (N-linked (GlcNAc...) asparagine) is linked at Asn521. An intrachain disulfide couples Cys526 to Cys583. An N-linked (GlcNAc...) asparagine glycan is attached at Asn591. 4 consecutive Fibronectin type-III domains span residues 606 to 704 (PPGG…TDGA), 709 to 806 (APSD…SAQD), 811 to 906 (APTE…APPS), and 907 to 1000 (QPPR…TLSP). The disordered stretch occupies residues 693 to 717 (SIPSNRIKTDGAAPNVAPSDVGGGG). Asn933 carries an N-linked (GlcNAc...) asparagine glycan. The GPI-anchor amidated serine moiety is linked to residue Ser993. Positions 994-1018 (GAPTLSPSLLGLLLPAFGILVYLEF) are cleaved as a propeptide — removed in mature form.

This sequence belongs to the immunoglobulin superfamily. Contactin family. As to quaternary structure, monomer. Interacts with CNTNAP1 in cis form. Binds to the carbonic-anhydrase like domain of PTPRZ1. Interacts with NOTCH1 and TNR. Detected in a complex with NRCAM and PTPRB. Interacts with TASOR. In terms of tissue distribution, strongly expressed in brain and in neuroblastoma and retinoblastoma cell lines. Lower levels of expression in lung, pancreas, kidney and skeletal muscle.

The protein resides in the cell membrane. In terms of biological role, contactins mediate cell surface interactions during nervous system development. Involved in the formation of paranodal axo-glial junctions in myelinated peripheral nerves and in the signaling between axons and myelinating glial cells via its association with CNTNAP1. Participates in oligodendrocytes generation by acting as a ligand of NOTCH1. Its association with NOTCH1 promotes NOTCH1 activation through the released notch intracellular domain (NICD) and subsequent translocation to the nucleus. Interaction with TNR induces a repulsion of neurons and an inhibition of neurite outgrowth. In Homo sapiens (Human), this protein is Contactin-1 (CNTN1).